The following is a 309-amino-acid chain: Probable 2,4-dienoyl-CoA reductase decr-1.2 [(3E)-enoyl-CoA-producing] (309 aa).

NADP(+) contacts are provided by residues 28–60 (VLVTGGGTGIGKAIATTFAHLRATVVIAARRME), 32–37 (GGGTGI), Arg-57, and Asp-83. Arg-57 provides a ligand contact to substrate. 2 residues coordinate substrate: Phe-116 and Ser-124. Tyr-166 acts as the Proton acceptor in catalysis. NADP(+) contacts are provided by residues Lys-181 and 207–210 (PGPI). Arg-218 lines the substrate pocket.

It belongs to the short-chain dehydrogenases/reductases (SDR) family. 2,4-dienoyl-CoA reductase subfamily.

The catalysed reaction is a (2E,4E)-dienoyl-CoA + NADPH + H(+) = a 4,5-saturated-(3E)-enoyl-CoA + NADP(+). It carries out the reaction a (2E,4Z)-dienoyl-CoA + NADPH + H(+) = a 4,5-saturated-(3E)-enoyl-CoA + NADP(+). Auxiliary enzyme of beta-oxidation. It participates in the metabolism of unsaturated fatty enoyl-CoA esters having double bonds in both even- and odd-numbered positions. Catalyzes the NADP-dependent reduction of 2,4-dienoyl-CoA to yield trans-3-enoyl-CoA. The chain is Probable 2,4-dienoyl-CoA reductase decr-1.2 [(3E)-enoyl-CoA-producing] from Caenorhabditis elegans.